The chain runs to 200 residues: Coiled-coil domain-containing protein 28B (200 aa).

Residue methionine 1 is modified to N-acetylmethionine. Positions 1–10 are enriched in basic residues; it reads MDDKKKKRSP. The disordered stretch occupies residues 1–49; sequence MDDKKKKRSPKPCLAQPAQAPGTLRRVPVPTSHSGSLALGLPHLPSPKQ. Phosphoserine occurs at positions 46 and 115. A compositionally biased stretch (acidic residues) spans 141 to 152; the sequence is EEEDDEEEEDGV. The interval 141–164 is disordered; it reads EEEDDEEEEDGVTEGLPEEQKKTM. A coiled-coil region spans residues 158–183; sequence EEQKKTMADRNLDQLLSNLEDLSNSI.

Interacts with BBS1, BBS2, BBS4, BBS5, BBS6, BBS7 and TTC8/BBS8. Interacts with MAPKAP1/SIN1 isoform 1 and RICTOR.

The protein resides in the cytoplasm. The protein localises to the cytoskeleton. Its subcellular location is the microtubule organizing center. It is found in the centrosome. In terms of biological role, involved in ciliogenesis. Regulates cilia length through its interaction with MAPKAP1/SIN1 but independently of mTORC2 complex. Modulates mTORC2 complex assembly and function, possibly enhances AKT1 phosphorylation. Does not seem to modulate assembly and function of mTORC1 complex. This chain is Coiled-coil domain-containing protein 28B (CCDC28B), found in Homo sapiens (Human).